The primary structure comprises 259 residues: uncharacterized protein (259 aa).

3 helical membrane-spanning segments follow: residues 55-75 (ILIL…SYLI), 85-105 (FPSI…FFSS), and 127-147 (FFFA…LCCG).

The protein localises to the membrane. This is an uncharacterized protein from Arabidopsis thaliana (Mouse-ear cress).